The following is a 332-amino-acid chain: 2-oxoglutarate-dependent dioxygenase FG08081 (332 aa).

Positions 176-280 (RSKSTLYFLH…RYSISYFLRA (105 aa)) constitute a Fe2OG dioxygenase domain. Fe cation contacts are provided by His201, Asp203, and His258. 2-oxoglutarate is bound at residue Arg271.

The protein belongs to the iron/ascorbate-dependent oxidoreductase family. The cofactor is Fe(2+).

The protein operates within mycotoxin biosynthesis. 2-oxoglutarate-dependent dioxygenase; part of the gene cluster that mediates the biosynthesis of butenolide, a mycotoxin that shows antibiotic activity but does not seem to play a major role in the spread of head blight in wheat. Butenolide is derived from glutamic acid via a 4-acetamido-2-butenoic acid intermediate. The predicted function of the NADH:flavin oxidoreductase FG08077, the cytochrome P450 monooxygenase FG08079, the decarboxylase FG08083, and the putative acetyltransferase FG08082 are consistent with this pathway, however, the respective activities of the butelonide biosynthesis cluster enzymes have still to be experimentally determined. This chain is 2-oxoglutarate-dependent dioxygenase FG08081, found in Gibberella zeae (strain ATCC MYA-4620 / CBS 123657 / FGSC 9075 / NRRL 31084 / PH-1) (Wheat head blight fungus).